A 98-amino-acid chain; its full sequence is MNKAILHAIIIYTLAGCPYCMKAKALLDKKEVAYEEIEVQNSQDPNVAVLRKKLNNPDRLTFPQIFIDNMHIGGCDDLYDLDKEGRLDKLLEGQPKKD.

Residues 1-98 (MNKAILHAII…KLLEGQPKKD (98 aa)) form the Glutaredoxin domain. Residues C17 and C20 are joined by a disulfide bond.

It belongs to the glutaredoxin family. As to quaternary structure, monomer.

It localises to the cytoplasm. Its function is as follows. Has a glutathione-disulfide oxidoreductase activity in the presence of NADPH and glutathione reductase. Reduces low molecular weight disulfides and proteins. The polypeptide is Glutaredoxin 1 (grxC1) (Rickettsia bellii (strain RML369-C)).